Reading from the N-terminus, the 1463-residue chain is MSKKLKEQAANDASEGDAIKVFVRVRPSESHDADAAFGQCLEVRLPDTIIMHSKPEPKVFTYDHVTAANTTQESVFTAVGKRIIESCVGGFNGTIFAYGQTGSGKTFTMLGPCEDGDNFHHEMRGVIPRSFEYLFSLVNREREKHGDRYEFLCRCSFLEIYNEQIYDLLDPASLGLHLRENMKKGVFVDGLIERAVASASEAYGVLQAGWHNRRVAATSMNRESSRSHAVFTVSIESKEKKAGVSNIRVSQLHLVDLAGSERQKDTKAIGVRLKEAGSINKSLSILGNVIMALVDIAHGKQRHVPYRDSKLSFLLRDSLGGNAKTYIIANVHPDAKCFGETLSTLKFARRAKMIKNRAVVNEDTQGNVMHLQAEIRRLREALCMKGAEGSIPRGPSESGDSQMSNSSTESNGPVSGQQSGSSSSSKWKKYFLEAMSLRDIVEVEKREMREKVSSLEELCSKRDQVISSNKMIIKFRNSTIDMLQKTKNKALLKEDRDLLNENLKKEIEQLQEQLEHNPFVMRYVVENQSLRAQNKKLKMMEAVRSGEAMAATKAEELETLFLELREGLSKNRRYSSTPVDGEKVPTSTLVILKSQIKKLQDELENAKQEHAEQEEMTRTTRLDLESELAAYKKANLDMEKTLQGMKIKNRMDRDAMNDIHMQTIKSITTPKKVTYQLRSRTVLRTAGEETPGGPGFAGLSDNGSPLRSHSTNSLPPSGDILVTNSSPAMSEEGIIDEEMPEHVIEQCNEALTIELQKLQDKNANLQQQLEEHESQKHKMLQNSSKLDHQLQQITELYSTESQAWQEHEKDLTTRLAEATIQISTLQRDYEMTRGEAEDFKVMLQAADKEIGQEKKQKSKVTQDWDRVRAALDAQVVRLENEMCGQSRELENLTEDREQLQDAYNTLQAEHEFQQQREADLENRLKGKKAEITQLQEEIQKHLEKLDSERDKSMRLTAELRQGDNTKKDLLDAQELIDQFREERDDLLHRLDTEALKLSSSKEDLETVNSALTAIKKTDVEQKEALSSLMAALQGQKGMVKDKEEQLASMQMQLEDTRGQVSLLEAALEEGKASGAGLQSQIAALEDRMHAQAGEYQEQIEQMRADAMDANQHQKELLKELEKQSEELTQLHKQMKEKEEEYETKESEHKDTIESLEEQLEEVKTNLSTVVVELDEPESKKRKMADAQAMEIESLRDSEKRFKELSSVYDNMRDQMNEEIRSLKMKADELEDVRISKEILQAQHTALTYEIEQVRNEMAEKESSLKDEVNHLKRDMERQKTVLASMLRDKDEAVEKLYTVQTTLDQVKANEEILQENMDQVMEELDRTSALESTHFKEKEDIKSKLEEEREEKSKLTKDLTRLKEVYEEAEKKITELGGHQNPKQKIHHLQAVKSENYFLKEEVESLEKQLGKAQSDSEQMKRDYEALQKRLTSSSAEPPEEAGATTCIRCLPHSKRIMQTQTA.

Positions 18–354 constitute a Kinesin motor domain; that stretch reads AIKVFVRVRP…LKFARRAKMI (337 aa). Residue 99–106 participates in ATP binding; that stretch reads GQTGSGKT. The disordered stretch occupies residues 387–424; that stretch reads AEGSIPRGPSESGDSQMSNSSTESNGPVSGQQSGSSSS. Residues 398–414 show a composition bias toward polar residues; sequence SGDSQMSNSSTESNGPV. Over residues 415 to 424 the composition is skewed to low complexity; it reads SGQQSGSSSS. 2 coiled-coil regions span residues 436–517 and 586–646; these read SLRD…LEHN and TSTL…QGMK. Disordered stretches follow at residues 686-720, 1335-1356, and 1409-1444; these read AGEE…SGDI, FKEK…SKLT, and QLGK…EAGA. Positions 701 to 715 are enriched in polar residues; the sequence is DNGSPLRSHSTNSLP. The span at 1418 to 1428 shows a compositional bias: basic and acidic residues; sequence EQMKRDYEALQ.

Belongs to the TRAFAC class myosin-kinesin ATPase superfamily. Kinesin family. KLP2 subfamily. In terms of assembly, homodimer.

The protein localises to the cytoplasm. Its subcellular location is the cytoskeleton. It is found in the spindle. Functionally, plus-end directed kinesin-like motor enzyme involved in mitotic spindle assembly. Plays a role in positioning spindle poles during mitosis, specifically at prometaphase. This is Kinesin-like protein KIF15 (KIF15) from Strongylocentrotus purpuratus (Purple sea urchin).